Consider the following 515-residue polypeptide: Putative ribose/galactose/methyl galactoside import ATP-binding protein (515 aa).

ABC transporter domains are found at residues 25–261 (LEVL…VGRE) and 268–515 (LREK…SGLN). 57–64 (GENGAGKS) is an ATP binding site.

It belongs to the ABC transporter superfamily. Carbohydrate importer 2 (CUT2) (TC 3.A.1.2) family.

The protein localises to the cell inner membrane. The catalysed reaction is D-ribose(out) + ATP + H2O = D-ribose(in) + ADP + phosphate + H(+). It catalyses the reaction D-galactose(out) + ATP + H2O = D-galactose(in) + ADP + phosphate + H(+). In terms of biological role, part of an ABC transporter complex involved in carbohydrate import. Could be involved in ribose, galactose and/or methyl galactoside import. Responsible for energy coupling to the transport system. This chain is Putative ribose/galactose/methyl galactoside import ATP-binding protein, found in Pseudomonas fluorescens (strain ATCC BAA-477 / NRRL B-23932 / Pf-5).